The sequence spans 535 residues: Major glycerophosphoinositol permease GIT3 (535 aa).

The chain crosses the membrane as a helical span at residues 49-69 (VVTSVKANSLWPAFASGAGLF). Residue Asn-75 is glycosylated (N-linked (GlcNAc...) asparagine). The next 5 membrane-spanning stretches (helical) occupy residues 101-121 (NIASIAFVGTVVGQLGFGYIS), 137-157 (LIFFTLMCAVGSWGVTVQGFF), 165-185 (FFLGVAIGAEYPTSSVIASEF), 204-224 (AMIDSGFVVSAFVPFVLIWIF), and 232-252 (LWRVAIGLGVIPPLSLFFMRL). The N-linked (GlcNAc...) asparagine glycan is linked to Asn-256. 6 consecutive transmembrane segments (helical) span residues 275–295 (WWLIVKFYWFRLTIVSLIWFI), 324–344 (WGWSIVFNLFYIPGAFLGAIS), 352–372 (LTLALGVGIQGVIGIAMSACL), 378–398 (HIAGFVVVFGIFTTFGEFGPG), 419–439 (GIAAAIGKIGAFVGTWVFPAI), and 455–475 (VPFYISSALCLFSACLAIFFC). N-linked (GlcNAc...) asparagine glycosylation occurs at Asn-532.

Belongs to the major facilitator superfamily. Sugar transporter (TC 2.A.1.1) family.

The protein localises to the cell membrane. It catalyses the reaction sn-glycerol 3-phosphocholine(out) = sn-glycerol 3-phosphocholine(in). Functionally, glycerophosphodiester transporter that mediates uptake of glycerophosphocholine (GroPCho) with GIT4. GIT3 acts as the major GroPCho permease. Does not possess detectable glycerophosphoinositol (GroPIns) transport activity. The expanded ability to utilize GroPIns and GroPCho results from the organism's pathogenic nature and its need to occupy a variety of environments within its host organism. This possibility is buttressed by the fact that GroPIns and GroPCho are present and abundant in human fluids. The protein is Major glycerophosphoinositol permease GIT3 of Candida albicans (strain SC5314 / ATCC MYA-2876) (Yeast).